A 545-amino-acid polypeptide reads, in one-letter code: CTP synthase (545 aa).

Residues 1–266 (MATNYIFVTG…DDFVCERFRL (266 aa)) form an amidoligase domain region. Ser14 contributes to the CTP binding site. Residue Ser14 coordinates UTP. ATP contacts are provided by residues 15-20 (SLGKGI) and Asp72. Residues Asp72 and Glu140 each contribute to the Mg(2+) site. CTP-binding positions include 147–149 (DIE), 187–192 (KTKPTQ), and Lys223. Residues 187-192 (KTKPTQ) and Lys223 each bind UTP. 239 to 241 (KDV) is a binding site for ATP. Residues 291–542 (TIGMVGKYTE…VKAAYENHKK (252 aa)) enclose the Glutamine amidotransferase type-1 domain. L-glutamine is bound at residue Gly352. Cys379 serves as the catalytic Nucleophile; for glutamine hydrolysis. Residues 380–383 (LGMQ), Glu403, and Arg470 each bind L-glutamine. Residues His515 and Glu517 contribute to the active site.

Belongs to the CTP synthase family. Homotetramer.

It catalyses the reaction UTP + L-glutamine + ATP + H2O = CTP + L-glutamate + ADP + phosphate + 2 H(+). The enzyme catalyses L-glutamine + H2O = L-glutamate + NH4(+). The catalysed reaction is UTP + NH4(+) + ATP = CTP + ADP + phosphate + 2 H(+). It functions in the pathway pyrimidine metabolism; CTP biosynthesis via de novo pathway; CTP from UDP: step 2/2. Allosterically activated by GTP, when glutamine is the substrate; GTP has no effect on the reaction when ammonia is the substrate. The allosteric effector GTP functions by stabilizing the protein conformation that binds the tetrahedral intermediate(s) formed during glutamine hydrolysis. Inhibited by the product CTP, via allosteric rather than competitive inhibition. Its function is as follows. Catalyzes the ATP-dependent amination of UTP to CTP with either L-glutamine or ammonia as the source of nitrogen. Regulates intracellular CTP levels through interactions with the four ribonucleotide triphosphates. In Haemophilus influenzae (strain PittGG), this protein is CTP synthase.